A 183-amino-acid chain; its full sequence is Holliday junction branch migration complex subunit RuvA (183 aa).

The domain I stretch occupies residues 1–63; sequence MIVGLIGVVE…EDAHLLYGFL (63 aa). Positions 64–141 are domain II; that stretch reads EEGEKILFER…IQDETKPMHN (78 aa). Asn141 is a region of interest (flexible linker). Residues 141–183 are domain III; that stretch reads NEVFLALESLGFKSAEINKVLKTLKPSLSIEAAIKEALQQLRS.

The protein belongs to the RuvA family. Homotetramer. Forms an RuvA(8)-RuvB(12)-Holliday junction (HJ) complex. HJ DNA is sandwiched between 2 RuvA tetramers; dsDNA enters through RuvA and exits via RuvB. An RuvB hexamer assembles on each DNA strand where it exits the tetramer. Each RuvB hexamer is contacted by two RuvA subunits (via domain III) on 2 adjacent RuvB subunits; this complex drives branch migration. In the full resolvosome a probable DNA-RuvA(4)-RuvB(12)-RuvC(2) complex forms which resolves the HJ.

The protein resides in the cytoplasm. Functionally, the RuvA-RuvB-RuvC complex processes Holliday junction (HJ) DNA during genetic recombination and DNA repair, while the RuvA-RuvB complex plays an important role in the rescue of blocked DNA replication forks via replication fork reversal (RFR). RuvA specifically binds to HJ cruciform DNA, conferring on it an open structure. The RuvB hexamer acts as an ATP-dependent pump, pulling dsDNA into and through the RuvAB complex. HJ branch migration allows RuvC to scan DNA until it finds its consensus sequence, where it cleaves and resolves the cruciform DNA. This is Holliday junction branch migration complex subunit RuvA from Helicobacter pylori (strain G27).